The chain runs to 491 residues: 2,3-bisphosphoglycerate-independent phosphoglycerate mutase (491 aa).

2 residues coordinate Mn(2+): D11 and S61. Residue S61 is the Phosphoserine intermediate of the active site. Substrate-binding positions include H118, 147–148, R177, R183, 248–251, and K320; these read RD and RSDR. D386, H390, D427, H428, and H445 together coordinate Mn(2+).

It belongs to the BPG-independent phosphoglycerate mutase family. Monomer. It depends on Mn(2+) as a cofactor.

The enzyme catalyses (2R)-2-phosphoglycerate = (2R)-3-phosphoglycerate. It participates in carbohydrate degradation; glycolysis; pyruvate from D-glyceraldehyde 3-phosphate: step 3/5. In terms of biological role, catalyzes the interconversion of 2-phosphoglycerate and 3-phosphoglycerate. In Aliarcobacter butzleri (strain RM4018) (Arcobacter butzleri), this protein is 2,3-bisphosphoglycerate-independent phosphoglycerate mutase.